Here is a 274-residue protein sequence, read N- to C-terminus: Dermonecrotic toxin SdSicTox-betaIIB1bv (274 aa).

His5 is an active-site residue. Residues Glu25 and Asp27 each contribute to the Mg(2+) site. His41 acts as the Nucleophile in catalysis. Cystine bridges form between Cys45–Cys51 and Cys47–Cys190. Asp85 contacts Mg(2+).

Belongs to the arthropod phospholipase D family. Class II subfamily. The cofactor is Mg(2+). Expressed by the venom gland.

It is found in the secreted. The enzyme catalyses an N-(acyl)-sphingosylphosphocholine = an N-(acyl)-sphingosyl-1,3-cyclic phosphate + choline. It carries out the reaction an N-(acyl)-sphingosylphosphoethanolamine = an N-(acyl)-sphingosyl-1,3-cyclic phosphate + ethanolamine. It catalyses the reaction a 1-acyl-sn-glycero-3-phosphocholine = a 1-acyl-sn-glycero-2,3-cyclic phosphate + choline. The catalysed reaction is a 1-acyl-sn-glycero-3-phosphoethanolamine = a 1-acyl-sn-glycero-2,3-cyclic phosphate + ethanolamine. Functionally, dermonecrotic toxins cleave the phosphodiester linkage between the phosphate and headgroup of certain phospholipids (sphingolipid and lysolipid substrates), forming an alcohol (often choline) and a cyclic phosphate. This toxin acts on sphingomyelin (SM). It may also act on ceramide phosphoethanolamine (CPE), lysophosphatidylcholine (LPC) and lysophosphatidylethanolamine (LPE), but not on lysophosphatidylserine (LPS), and lysophosphatidylglycerol (LPG). It acts by transphosphatidylation, releasing exclusively cyclic phosphate products as second products. Induces dermonecrosis, hemolysis, increased vascular permeability, edema, inflammatory response, and platelet aggregation. In Sicarius cf. damarensis (strain GJB-2008) (Six-eyed sand spider), this protein is Dermonecrotic toxin SdSicTox-betaIIB1bv.